A 1009-amino-acid chain; its full sequence is Cilia- and flagella-associated protein 70 (1009 aa).

A compositionally biased stretch (basic and acidic residues) spans 410–428 (NLKEDKPVKEKDIDGRPRP). The disordered stretch occupies residues 410–457 (NLKEDKPVKEKDIDGRPRPGDVQAPSIKSQSSDTPLEGEPPLSHNPEG). TPR repeat units lie at residues 498-531 (PPLT…EYYR), 635-668 (SEQL…EPQN), 669-702 (LDHW…NQSH), 704-736 (HSLL…EPTN), 888-921 (HFIF…SPSC), 923-954 (TWLG…NNYN), and 956-988 (EVWA…KLKD).

It belongs to the CFAP70 family.

The protein resides in the cell projection. Its subcellular location is the cilium. It localises to the flagellum. It is found in the cytoplasm. The protein localises to the cytoskeleton. The protein resides in the flagellum basal body. Its subcellular location is the cilium axoneme. Its function is as follows. Axoneme-binding protein that plays a role in the regulation of ciliary motility and cilium length. The protein is Cilia- and flagella-associated protein 70 of Macaca fascicularis (Crab-eating macaque).